Reading from the N-terminus, the 449-residue chain is L10-interacting MYB domain-containing protein (449 aa).

The 64-residue stretch at 162-225 (SNPQTKGYWS…YTRPQLKNHW (64 aa)) folds into the Myb-like domain. Residues 297–324 (TYTPPSRSRKKLLHNRSESPQWRDTTPL) form a disordered region. Positions 314 to 324 (ESPQWRDTTPL) are enriched in polar residues.

In terms of assembly, interacts with RPL10A. In terms of tissue distribution, expressed in seedlings, leaves, roots, stems and flowers.

It localises to the nucleus. Functionally, transcriptional repressor that associates with ribosomal protein promoters. This chain is L10-interacting MYB domain-containing protein, found in Arabidopsis thaliana (Mouse-ear cress).